A 176-amino-acid chain; its full sequence is ATP-dependent protease subunit HslV (176 aa).

Residue threonine 4 is part of the active site. The Na(+) site is built by glycine 158, cysteine 161, and threonine 164.

Belongs to the peptidase T1B family. HslV subfamily. A double ring-shaped homohexamer of HslV is capped on each side by a ring-shaped HslU homohexamer. The assembly of the HslU/HslV complex is dependent on binding of ATP.

It localises to the cytoplasm. It catalyses the reaction ATP-dependent cleavage of peptide bonds with broad specificity.. With respect to regulation, allosterically activated by HslU binding. Protease subunit of a proteasome-like degradation complex believed to be a general protein degrading machinery. The chain is ATP-dependent protease subunit HslV from Rhizobium meliloti (strain 1021) (Ensifer meliloti).